The chain runs to 313 residues: tRNA dimethylallyltransferase (313 aa).

An ATP-binding site is contributed by 10–17 (GPTAVGKT). 12 to 17 (TAVGKT) lines the substrate pocket. Residues 35 to 38 (DSMQ) are interaction with substrate tRNA.

The protein belongs to the IPP transferase family. As to quaternary structure, monomer. Requires Mg(2+) as cofactor.

It carries out the reaction adenosine(37) in tRNA + dimethylallyl diphosphate = N(6)-dimethylallyladenosine(37) in tRNA + diphosphate. In terms of biological role, catalyzes the transfer of a dimethylallyl group onto the adenine at position 37 in tRNAs that read codons beginning with uridine, leading to the formation of N6-(dimethylallyl)adenosine (i(6)A). The protein is tRNA dimethylallyltransferase of Alkaliphilus oremlandii (strain OhILAs) (Clostridium oremlandii (strain OhILAs)).